We begin with the raw amino-acid sequence, 272 residues long: 5'-nucleotidase SurE (272 aa).

Residues Asp8, Asp9, Ser39, and Asn96 each contribute to the a divalent metal cation site.

This sequence belongs to the SurE nucleotidase family. A divalent metal cation is required as a cofactor.

The protein localises to the cytoplasm. The catalysed reaction is a ribonucleoside 5'-phosphate + H2O = a ribonucleoside + phosphate. Its function is as follows. Nucleotidase that shows phosphatase activity on nucleoside 5'-monophosphates. The chain is 5'-nucleotidase SurE from Heliobacterium modesticaldum (strain ATCC 51547 / Ice1).